Reading from the N-terminus, the 221-residue chain is MILFVSATDTGVGKTYISTILVEYLKNKGINVDYIKPIETGVDEKPEDAYKVSSILGKPWQESVIYIFKKPMSPYACSLDEEVDIDVDRIIKTIKEREQKASVLIVEGAGGIAVPIKVKPLIDYAYLIKSLHALPLVVARAYLGTLNHSFLTYFYLKSKDIKPLGFVLNGFDYEEPSQYSNAYILQDMIEEHINIWRLDKNPDENQRINLAENIWKSIANF.

11 to 16 is an ATP binding site; sequence GVGKTY. Threonine 15 contacts Mg(2+). Residue lysine 36 is part of the active site. Threonine 40 is a binding site for substrate. ATP-binding positions include aspartate 48 and 107 to 110; that span reads EGAG. Mg(2+)-binding residues include aspartate 48 and glutamate 107.

This sequence belongs to the dethiobiotin synthetase family. In terms of assembly, homodimer. The cofactor is Mg(2+).

The protein resides in the cytoplasm. The enzyme catalyses (7R,8S)-7,8-diammoniononanoate + CO2 + ATP = (4R,5S)-dethiobiotin + ADP + phosphate + 3 H(+). The protein operates within cofactor biosynthesis; biotin biosynthesis; biotin from 7,8-diaminononanoate: step 1/2. Its function is as follows. Catalyzes a mechanistically unusual reaction, the ATP-dependent insertion of CO2 between the N7 and N8 nitrogen atoms of 7,8-diaminopelargonic acid (DAPA, also called 7,8-diammoniononanoate) to form a ureido ring. The sequence is that of ATP-dependent dethiobiotin synthetase BioD from Hydrogenobaculum sp. (strain Y04AAS1).